Here is a 471-residue protein sequence, read N- to C-terminus: Glutamate--tRNA ligase (471 aa).

The short motif at 9–19 is the 'HIGH' region element; the sequence is PSPTGYLHVGG. The Zn(2+) site is built by Cys98, Cys100, Cys125, and His127. Residues 237–241 carry the 'KMSKS' region motif; it reads KLSKR. Residue Lys240 coordinates ATP.

It belongs to the class-I aminoacyl-tRNA synthetase family. Glutamate--tRNA ligase type 1 subfamily. In terms of assembly, monomer. Requires Zn(2+) as cofactor.

It localises to the cytoplasm. The catalysed reaction is tRNA(Glu) + L-glutamate + ATP = L-glutamyl-tRNA(Glu) + AMP + diphosphate. Its function is as follows. Catalyzes the attachment of glutamate to tRNA(Glu) in a two-step reaction: glutamate is first activated by ATP to form Glu-AMP and then transferred to the acceptor end of tRNA(Glu). The sequence is that of Glutamate--tRNA ligase from Citrobacter koseri (strain ATCC BAA-895 / CDC 4225-83 / SGSC4696).